Here is a 157-residue protein sequence, read N- to C-terminus: SsrA-binding protein (157 aa).

The segment at 133-157 is disordered; sequence LHDKRESEKKRDWGREKGRLLRARG. A compositionally biased stretch (basic and acidic residues) spans 135–151; sequence DKRESEKKRDWGREKGR.

It belongs to the SmpB family.

The protein resides in the cytoplasm. Functionally, required for rescue of stalled ribosomes mediated by trans-translation. Binds to transfer-messenger RNA (tmRNA), required for stable association of tmRNA with ribosomes. tmRNA and SmpB together mimic tRNA shape, replacing the anticodon stem-loop with SmpB. tmRNA is encoded by the ssrA gene; the 2 termini fold to resemble tRNA(Ala) and it encodes a 'tag peptide', a short internal open reading frame. During trans-translation Ala-aminoacylated tmRNA acts like a tRNA, entering the A-site of stalled ribosomes, displacing the stalled mRNA. The ribosome then switches to translate the ORF on the tmRNA; the nascent peptide is terminated with the 'tag peptide' encoded by the tmRNA and targeted for degradation. The ribosome is freed to recommence translation, which seems to be the essential function of trans-translation. The sequence is that of SsrA-binding protein from Nitrobacter winogradskyi (strain ATCC 25391 / DSM 10237 / CIP 104748 / NCIMB 11846 / Nb-255).